The sequence spans 229 residues: E3 ubiquitin-protein ligase RNF114 (229 aa).

Positions 1–23 (MAAAQPESRDGAAQSAKPASETD) are disordered. Residues 30–69 (CPVCLEVFEKPVQVPCGHVFCSACLQECLKPKKPVCGVCR) form an RING-type zinc finger. The Zn(2+) site is built by C92 and C95. The segment at 92–111 (CHGCRKNFILSKIRAHVTSC) adopts a C2HC RNF-type zinc-finger fold. K103 carries the post-translational modification N6-acetyllysine. Positions 107 and 111 each coordinate Zn(2+). An N6-acetyllysine modification is found at K113.

Interacts with XAF1, the interaction increases XAF1 stability and proapoptotic effects, and may regulate IFN signaling. Post-translationally, autoubiquitinated. Polyubiquitinated in the presence of E2 enzymes UBE2D1, UBE2D2 and UBE2D3, but only monoubiquitinated in the presence of UBE2E1.

The protein resides in the cytoplasm. It localises to the nucleus. The enzyme catalyses S-ubiquitinyl-[E2 ubiquitin-conjugating enzyme]-L-cysteine + [acceptor protein]-L-lysine = [E2 ubiquitin-conjugating enzyme]-L-cysteine + N(6)-ubiquitinyl-[acceptor protein]-L-lysine.. It functions in the pathway protein modification; protein ubiquitination. E3 ubiquitin-protein ligase that promotes the ubiquitination of various substrates. In turn, participates in the regulation of many biological processes including cell cycle, apoptosis, osteoclastogenesis as well as innate or adaptive immunity. Acts as negative regulator of NF-kappa-B-dependent transcription by promoting the ubiquitination and stabilization of the NF-kappa-B inhibitor TNFAIP3. May promote the ubiquitination of TRAF6 as well. Also acts as a negative regulator of T-cell activation. Inhibits cellular dsRNA responses and interferon production by targeting MAVS component for proteasomal degradation. Ubiquitinates the CDK inhibitor CDKN1A leading to its degradationand probably also CDKN1B and CDKN1C. This activity stimulates cell cycle G1-to-S phase transition and suppresses cellular senescence. May play a role in spermatogenesis. The chain is E3 ubiquitin-protein ligase RNF114 (Rnf114) from Mus musculus (Mouse).